Here is a 270-residue protein sequence, read N- to C-terminus: Putative phosphoenolpyruvate synthase regulatory protein (270 aa).

150–157 (GVSRCGKT) serves as a coordination point for ADP.

This sequence belongs to the pyruvate, phosphate/water dikinase regulatory protein family. PSRP subfamily.

It catalyses the reaction [pyruvate, water dikinase] + ADP = [pyruvate, water dikinase]-phosphate + AMP + H(+). It carries out the reaction [pyruvate, water dikinase]-phosphate + phosphate + H(+) = [pyruvate, water dikinase] + diphosphate. Bifunctional serine/threonine kinase and phosphorylase involved in the regulation of the phosphoenolpyruvate synthase (PEPS) by catalyzing its phosphorylation/dephosphorylation. The protein is Putative phosphoenolpyruvate synthase regulatory protein of Aeromonas salmonicida (strain A449).